Consider the following 602-residue polypeptide: Carbon catabolite repressor protein 4 homolog 1 (602 aa).

Residues 113–136 (ASAATEGNDEEELPRLNSSGSGSG) are disordered. Glu-299 contacts Mg(2+).

The protein belongs to the CCR4/nocturin family. Component of the CCR4-NOT complex, at least composed of CRR4 and CAF1 proteins. Requires Mg(2+) as cofactor.

The protein resides in the nucleus. Its subcellular location is the cytoplasm. It carries out the reaction Exonucleolytic cleavage of poly(A) to 5'-AMP.. Its function is as follows. Acts as a catalytic component of the CCR4-NOT core complex, which in the nucleus seems to be a general transcription factor, and in the cytoplasm the major mRNA deadenylase involved in mRNA turnover. This chain is Carbon catabolite repressor protein 4 homolog 1 (CCR4-1), found in Arabidopsis thaliana (Mouse-ear cress).